A 248-amino-acid chain; its full sequence is Probable transcriptional regulatory protein BH14810 (248 aa).

It belongs to the TACO1 family.

Its subcellular location is the cytoplasm. This chain is Probable transcriptional regulatory protein BH14810, found in Bartonella henselae (strain ATCC 49882 / DSM 28221 / CCUG 30454 / Houston 1) (Rochalimaea henselae).